The following is a 649-amino-acid chain: tRNA-guanine(15) transglycosylase (649 aa).

Asp-88 functions as the Nucleophile in the catalytic mechanism. Substrate contacts are provided by Asp-123 and Ala-194. 3 residues coordinate Zn(2+): Cys-280, Cys-282, and Cys-285. The PUA domain maps to 573 to 648 (NYRIVIDSSV…VAATLRGGIK (76 aa)).

It belongs to the archaeosine tRNA-ribosyltransferase family. It depends on Zn(2+) as a cofactor.

It carries out the reaction guanosine(15) in tRNA + 7-cyano-7-deazaguanine = 7-cyano-7-carbaguanosine(15) in tRNA + guanine. It functions in the pathway tRNA modification; archaeosine-tRNA biosynthesis. Exchanges the guanine residue with 7-cyano-7-deazaguanine (preQ0) at position 15 in the dihydrouridine loop (D-loop) of archaeal tRNAs. In Methanococcus maripaludis (strain C5 / ATCC BAA-1333), this protein is tRNA-guanine(15) transglycosylase.